Consider the following 188-residue polypeptide: Protein GrpE (188 aa).

A compositionally biased stretch (basic and acidic residues) spans M1 to Q16. The segment at M1–E31 is disordered.

Belongs to the GrpE family. As to quaternary structure, homodimer.

It is found in the cytoplasm. Participates actively in the response to hyperosmotic and heat shock by preventing the aggregation of stress-denatured proteins, in association with DnaK and GrpE. It is the nucleotide exchange factor for DnaK and may function as a thermosensor. Unfolded proteins bind initially to DnaJ; upon interaction with the DnaJ-bound protein, DnaK hydrolyzes its bound ATP, resulting in the formation of a stable complex. GrpE releases ADP from DnaK; ATP binding to DnaK triggers the release of the substrate protein, thus completing the reaction cycle. Several rounds of ATP-dependent interactions between DnaJ, DnaK and GrpE are required for fully efficient folding. The sequence is that of Protein GrpE from Bacillus cereus (strain G9842).